A 285-amino-acid polypeptide reads, in one-letter code: Bifunctional protein FolD (285 aa).

NADP(+) is bound by residues 165-167 (GRS), S190, and I231.

This sequence belongs to the tetrahydrofolate dehydrogenase/cyclohydrolase family. As to quaternary structure, homodimer.

It catalyses the reaction (6R)-5,10-methylene-5,6,7,8-tetrahydrofolate + NADP(+) = (6R)-5,10-methenyltetrahydrofolate + NADPH. The catalysed reaction is (6R)-5,10-methenyltetrahydrofolate + H2O = (6R)-10-formyltetrahydrofolate + H(+). Its pathway is one-carbon metabolism; tetrahydrofolate interconversion. Its function is as follows. Catalyzes the oxidation of 5,10-methylenetetrahydrofolate to 5,10-methenyltetrahydrofolate and then the hydrolysis of 5,10-methenyltetrahydrofolate to 10-formyltetrahydrofolate. The chain is Bifunctional protein FolD from Verminephrobacter eiseniae (strain EF01-2).